The primary structure comprises 1002 residues: Vacuolar protein sorting-associated protein 18 homolog (1002 aa).

The residue at position 344 (serine 344) is a Phosphoserine. A CHCR repeat occupies 650–804 (LMAQGSRLEV…DIKGTNDVKK (155 aa)). The stretch at 827-880 (FEKIDNFKEAICDALRDYNQRIQELQREMAETTEQTDRVTAELQQLRQHSLTVE) forms a coiled coil. The RING-type; degenerate zinc-finger motif lies at 885–924 (CEICEMMLLVKPFFIFICGHKFHSDCLEKHVVPLLTKEQC).

It belongs to the VPS18 family. In terms of assembly, component of the class C core vacuole/endosome tethering (CORVET) complex composed of at least Vps8, dor/Vps18, car/Vps33A and Vps16A; unlike in other species, Vps11 is not part of the Drosophila complex. Due to the reduced number of components the Drosophila CORVET complex is often referred to as the miniCORVET complex. Interacts with car/Vps33A. Interacts with ema. Component of the homotypic fusion and vacuole protein sorting (HOPS) complex, composed of Vps16A, car/Vps33A, dor/Vps18, Vps39, Vps11 and lt/Vps41. The tethering complex core made up of Vps16A, car/Vps33A and dor/Vps18 and shared by both HOPS and CORVET, preferentially associates with CORVET-specific Vps8 over HOPS-specific lt/Vps41. Interacts with Syx17 (via SNARE domain); the interaction may involve multiple components of the HOPS complex and may promote assembly of the Syx17-Snap29-Vamp7 trans-SNARE complex.

It localises to the early endosome. Its subcellular location is the late endosome membrane. The protein resides in the lysosome membrane. It is found in the cytoplasmic vesicle. The protein localises to the autophagosome. Core component of the class C core vacuole/endosome tethering (CORVET) and the homotypic fusion and vacuole protein sorting (HOPS) tethering complexes involved in endo-lysosomal vesicle trafficking and lysosome biogenesis. The CORVET complex facilitates docking and fusion of endosomal vesicles during endosome maturation, acts upstream of HOPS, but is not involved in autophagic flux. The CORVET complex may cooperate with the early endosomal tether Rbsn-5 to mediate endosomal fusion. The HOPS complex facilitates docking and fusion of lysosomes with late endosomes and several other types of vesicles. The HOPS complex is also involved in autophagy and crinophagy (the elimination of unused secretory granules through their fusion with lysosomes). The HOPS complex mediates autophagocitic flux, probably by binding autophagosome-associated Syx17/syntaxin 17, promoting assembly of the trans-SNARE complex and instigating autophagosome-lysosome fusion. Independent of Syx17/syntaxin 17, HOPS is involved in biosynthetic transport to lysosomes and lysosome-related organelles such as eye-pigment granules. Required for endocytic degradation of boss/bride of sevenless and N/Notch in developing ommatidia. Required for autophagocytosis-dependent remodeling of myofibrils and transverse-tubules (T-tubules) during metamorphosis. In larval neuromuscular junctions, essential for endosomal sorting that traffics old or dysfunctional synaptic vesicle proteins through a degradative endolysosomal route. Required to maintain normal levels of rush, which functions in endosome formation and trafficking. In Drosophila melanogaster (Fruit fly), this protein is Vacuolar protein sorting-associated protein 18 homolog.